A 513-amino-acid chain; its full sequence is Solute carrier family 2, facilitated glucose transporter member 7 (513 aa).

The Cytoplasmic portion of the chain corresponds to M1 to P21. Residues T22 to I42 form a helical membrane-spanning segment. Residues A43–S78 lie on the Extracellular side of the membrane. N-linked (GlcNAc...) asparagine glycosylation occurs at N57. Residues C79–V99 form a helical membrane-spanning segment. The Cytoplasmic portion of the chain corresponds to N100–T107. The chain crosses the membrane as a helical span at residues L108–A128. At R129–R138 the chain is on the extracellular side. The chain crosses the membrane as a helical span at residues V139–L159. Residues A160–T172 lie on the Cytoplasmic side of the membrane. The helical transmembrane segment at E173–G193 threads the bilayer. The Extracellular portion of the chain corresponds to N194 to W198. A helical transmembrane segment spans residues P199 to F219. The Cytoplasmic portion of the chain corresponds to P220–R282. Residues W283–V303 form a helical membrane-spanning segment. D-glucose is bound by residues Q295–Q296 and N301. Residues N304–Q322 lie on the Extracellular side of the membrane. A helical membrane pass occupies residues Y323–I343. N332 provides a ligand contact to D-glucose. Residues E344 to L351 lie on the Cytoplasmic side of the membrane. The chain crosses the membrane as a helical span at residues L352 to L372. At Q373–S380 the chain is on the extracellular side. A helical membrane pass occupies residues Y381 to V401. Over P402–T416 the chain is Cytoplasmic. A helical transmembrane segment spans residues A417–F437. Residues P438 to A446 are Extracellular-facing. A helical membrane pass occupies residues Y447–I467. Topologically, residues P468–F513 are cytoplasmic. Positions K494–F513 are disordered.

Belongs to the major facilitator superfamily. Sugar transporter (TC 2.A.1.1) family. Glucose transporter subfamily.

It is found in the cell membrane. It localises to the apical cell membrane. The catalysed reaction is D-glucose(out) = D-glucose(in). It catalyses the reaction D-fructose(out) = D-fructose(in). Probable sugar transporter. Even if its physiological substrate is subject to discussion, it is able to transport glucose and fructose. Does not transport galactose, 2-deoxy-d-glucose and xylose. The sequence is that of Solute carrier family 2, facilitated glucose transporter member 7 from Mus musculus (Mouse).